The following is a 187-amino-acid chain: Basic helix-loop-helix transcription factor scleraxis (187 aa).

2 disordered regions span residues 21 to 83 (LSED…TNSV) and 140 to 163 (AFFH…QPKQ). The span at 34–43 (SDEKPFHLDA) shows a compositional bias: basic and acidic residues. Residues 50–72 (AGKRRSGKKAGRLHREPRQRHTA) show a composition bias toward basic residues. The bHLH domain maps to 67-119 (RQRHTANARERDRTNSVNTAFTALRTLIPTEPADRKLSKIETLRLASSYISHL).

In terms of assembly, efficient DNA binding requires dimerization with another bHLH protein. Dimerizes and binds the E-box consensus sequence with E12. Expressed in the intersomitic, the superficial proximomedial limb mesenchyme and the subectodermal mesenchyme.

It localises to the nucleus. Its function is as follows. Plays an early essential role in mesoderm formation, as well as a later role in formation of somite-derived chondrogenic lineages. In Gallus gallus (Chicken), this protein is Basic helix-loop-helix transcription factor scleraxis (SCX).